Here is a 119-residue protein sequence, read N- to C-terminus: Mitochondrial coiled-coil domain protein 1 (119 aa).

A mitochondrion-targeting transit peptide spans 1–24; sequence MVLPLPWLSRYHFLRLLLPSWSLA. The segment at 25-65 is disordered; sequence PQGSHGCCSQNPKASMEEQTSSRGNGKMTSPPRGPGTHRTA. Residues 31-52 are compositionally biased toward polar residues; that stretch reads CCSQNPKASMEEQTSSRGNGKM. Residues 62 to 116 are a coiled coil; that stretch reads HRTAELARAEELLEQQLELYQALLEGQEGAWEAQALVLKIQKLKEQMRRHQESLG.

Widely expressed. Expressed in adult and fetal liver, kidney and lung. Expressed in fetal brain. Weakly expressed in fetal spleen.

The protein resides in the mitochondrion. The sequence is that of Mitochondrial coiled-coil domain protein 1 (MCCD1) from Homo sapiens (Human).